Consider the following 254-residue polypeptide: Phosphoribosylaminoimidazole-succinocarboxamide synthase (254 aa).

It belongs to the SAICAR synthetase family.

It carries out the reaction 5-amino-1-(5-phospho-D-ribosyl)imidazole-4-carboxylate + L-aspartate + ATP = (2S)-2-[5-amino-1-(5-phospho-beta-D-ribosyl)imidazole-4-carboxamido]succinate + ADP + phosphate + 2 H(+). The protein operates within purine metabolism; IMP biosynthesis via de novo pathway; 5-amino-1-(5-phospho-D-ribosyl)imidazole-4-carboxamide from 5-amino-1-(5-phospho-D-ribosyl)imidazole-4-carboxylate: step 1/2. This chain is Phosphoribosylaminoimidazole-succinocarboxamide synthase, found in Bartonella tribocorum (strain CIP 105476 / IBS 506).